Reading from the N-terminus, the 199-residue chain is Ras-related protein Rab-7b (199 aa).

GTP contacts are provided by residues 15–22 (GAIGVGKT), 34–40 (YEEYQTT), 63–67 (DTGGQ), 124–127 (NKID), and 154–155 (AK). 2 short sequence motifs (switch) span residues 28 to 41 (YVHK…QTTL) and 67 to 82 (QERF…KGSD). Position 186 is a phosphoserine (Ser-186). Residues Cys-198 and Cys-199 are each lipidated (S-geranylgeranyl cysteine).

Belongs to the small GTPase superfamily. Rab family. Expressed in heart, placenta, lung, skeletal muscle and peripheral blood leukocyte.

It localises to the late endosome. The protein resides in the lysosome. It is found in the golgi apparatus. The protein localises to the trans-Golgi network. Its subcellular location is the cytoplasmic vesicle. It localises to the phagosome. The protein resides in the phagosome membrane. In terms of biological role, controls vesicular trafficking from endosomes to the trans-Golgi network (TGN). Acts as a negative regulator of TLR9 signaling and can suppress TLR9-triggered TNFA, IL6, and IFNB production in macrophages by promoting TLR9 lysosomal degradation. Also negatively regulates TLR4 signaling in macrophages by promoting lysosomal degradation of TLR4. Promotes megakaryocytic differentiation by increasing NF-kappa-B-dependent IL6 production and subsequently enhancing the association of STAT3 with GATA1. Not involved in the regulation of the EGF- and EGFR degradation pathway. The sequence is that of Ras-related protein Rab-7b (RAB7B) from Homo sapiens (Human).